The chain runs to 393 residues: tRNA(Met) cytidine acetate ligase (393 aa).

3 residues coordinate ATP: Gly81, Asn142, and Arg167.

This sequence belongs to the TmcAL family.

It is found in the cytoplasm. The catalysed reaction is cytidine(34) in elongator tRNA(Met) + acetate + ATP = N(4)-acetylcytidine(34) in elongator tRNA(Met) + AMP + diphosphate. In terms of biological role, catalyzes the formation of N(4)-acetylcytidine (ac(4)C) at the wobble position of elongator tRNA(Met), using acetate and ATP as substrates. First activates an acetate ion to form acetyladenylate (Ac-AMP) and then transfers the acetyl group to tRNA to form ac(4)C34. The sequence is that of tRNA(Met) cytidine acetate ligase from Bacillus cereus (strain Q1).